A 147-amino-acid chain; its full sequence is Ubiquitin-conjugating enzyme E2-16 kDa (147 aa).

Residues 1 to 147 form the UBC core domain; the sequence is MAFKRINKEL…AREWTRKYAI (147 aa). Cys107 functions as the Glycyl thioester intermediate in the catalytic mechanism.

This sequence belongs to the ubiquitin-conjugating enzyme family.

It carries out the reaction S-ubiquitinyl-[E1 ubiquitin-activating enzyme]-L-cysteine + [E2 ubiquitin-conjugating enzyme]-L-cysteine = [E1 ubiquitin-activating enzyme]-L-cysteine + S-ubiquitinyl-[E2 ubiquitin-conjugating enzyme]-L-cysteine.. Its pathway is protein modification; protein ubiquitination. In terms of biological role, catalyzes the covalent attachment of ubiquitin to other proteins. May also mediate selective proteolysis pathways. The polypeptide is Ubiquitin-conjugating enzyme E2-16 kDa (UBC1) (Colletotrichum gloeosporioides (Anthracnose fungus)).